We begin with the raw amino-acid sequence, 338 residues long: uncharacterized protein (338 aa).

Residues 1 to 29 form the signal peptide; the sequence is MIKQLCKNITICTLALSTTFTVLPATSFA.

Belongs to the aerolysin family.

This is an uncharacterized protein from Staphylococcus aureus (strain USA300).